The primary structure comprises 188 residues: Probable chorismate pyruvate-lyase (188 aa).

Residues Arg-77, Leu-115, and Glu-174 each coordinate substrate.

The protein belongs to the UbiC family.

It is found in the cytoplasm. It carries out the reaction chorismate = 4-hydroxybenzoate + pyruvate. It participates in cofactor biosynthesis; ubiquinone biosynthesis. Removes the pyruvyl group from chorismate, with concomitant aromatization of the ring, to provide 4-hydroxybenzoate (4HB) for the ubiquinone pathway. This is Probable chorismate pyruvate-lyase from Shewanella loihica (strain ATCC BAA-1088 / PV-4).